Reading from the N-terminus, the 467-residue chain is 3-isopropylmalate dehydratase large subunit (467 aa).

[4Fe-4S] cluster is bound by residues C347, C407, and C410.

It belongs to the aconitase/IPM isomerase family. LeuC type 1 subfamily. In terms of assembly, heterodimer of LeuC and LeuD. Requires [4Fe-4S] cluster as cofactor.

The enzyme catalyses (2R,3S)-3-isopropylmalate = (2S)-2-isopropylmalate. The protein operates within amino-acid biosynthesis; L-leucine biosynthesis; L-leucine from 3-methyl-2-oxobutanoate: step 2/4. Catalyzes the isomerization between 2-isopropylmalate and 3-isopropylmalate, via the formation of 2-isopropylmaleate. The chain is 3-isopropylmalate dehydratase large subunit from Nostoc sp. (strain PCC 7120 / SAG 25.82 / UTEX 2576).